The primary structure comprises 430 residues: 3-phosphoshikimate 1-carboxyvinyltransferase (430 aa).

3-phosphoshikimate contacts are provided by lysine 21, serine 22, and arginine 26. Lysine 21 provides a ligand contact to phosphoenolpyruvate. Residues glycine 92 and arginine 120 each coordinate phosphoenolpyruvate. Serine 165, serine 166, glutamine 167, serine 193, aspartate 314, and lysine 341 together coordinate 3-phosphoshikimate. Glutamine 167 lines the phosphoenolpyruvate pocket. The active-site Proton acceptor is the aspartate 314. The phosphoenolpyruvate site is built by arginine 345, arginine 386, and lysine 411.

The protein belongs to the EPSP synthase family. Monomer.

Its subcellular location is the cytoplasm. It catalyses the reaction 3-phosphoshikimate + phosphoenolpyruvate = 5-O-(1-carboxyvinyl)-3-phosphoshikimate + phosphate. It functions in the pathway metabolic intermediate biosynthesis; chorismate biosynthesis. Its function is as follows. Catalyzes the transfer of the enolpyruvyl moiety of phosphoenolpyruvate (PEP) to the 5-hydroxyl of shikimate-3-phosphate (S3P) to produce enolpyruvyl shikimate-3-phosphate and inorganic phosphate. The chain is 3-phosphoshikimate 1-carboxyvinyltransferase from Methanospirillum hungatei JF-1 (strain ATCC 27890 / DSM 864 / NBRC 100397 / JF-1).